Reading from the N-terminus, the 1445-residue chain is MSRPSSVSPRPPAPSGGGTGGGGGGSGGGGGGGGGGPASCGPGGGGRAKGLKDIRIDEEVKIAVNIALERFRYGDQREMEFPSSLTSTERAFIHRLSQSLGLVSKSKGKGANRYLTVKKKDGSETAHAMMTCNLTHNTKHAVRSLIQRFPVTNKERTELLPKTERGNVFAVEAENREMSKTSGRLNNGIPQVPVKRGESEFDSFRQSLPVFEKQEEIVKIIKENKVVLIVGETGSGKTTQIPQFLLDDCFKNGIPCRIFCTQPRRLAAIAVAERVAAERRERIGQTIGYQIRLESRVSPKTLLTFCTNGVLLRTLMAGDSTLSTVTHVIVDEVHERDRFSDFLLTKLRDLLQKHPTLKLILSSAALDVNLFIRYFGSCPVIYIQGRPFEVKEMFLEDILRTTGYTNKEMLKYKKEKQREEKQQTTLTEWYSAQENTFKPESQRQRAVASVSEEYDLLDDGGDAVFSQLTEKDVNCLEPWLIKEMDACLSDIWLHKDVDAFAQVFHLILTENVSVDYRHSETSATALMVAAGRGFTSQVEQLISMGANVHSKASNGWMALDWAKHFGQTEIVDLLESYSASLEFGNLDESSLVQTNGNDLSAEDRELLKAYHHSFDDEKVDLDLIMHLLYNICHSCDAGAILIFLPGYDEIVGLRDRILFDDKRFADNTHRYQVFMLHSNMQTSDQKKVLKNPPAGVRKIILSTNIAETSITVNDVVFVIDSGKVKEKSFDALNFVTMLKMVWISKASAIQRKGRAGRCRPGICFRLFSRLRFQNMLEFQTPELLRMPLQELCLHTKLLAPVNCTIADFLMKAPEPPPALIVRNAVQMLKTIDAMDAWEDLTELGYHLADLPVEPHLGKMVLCAVVLKCLDPILTIACTLAYRDPFVLPTQASQKRAAMLCRKRFTAGTFSDHMALLRAFQAWQKARSDGWERAFCEKNFLSQATMEIIIGMRTQLLGQLRASGFVRARGGGDIRDVNTNSENWAVVKAALVAGMYPNLVHVDRENVILTGPKEKKVRFHPTSVLSQPQYKKIPPANGQAAAIQALPTDWLIYDEMTRAHRIANIRCCSAVTPVTVLVFCGPARLASNALQEPSSFRADGIPNDSSDSEMEDRTTANLAALKLDEWLNFKLEPEAASLLLQLRQKWHSLFLRRMRAPSKPWSQVDEATIRAIIAVLSTEEQSAGLQQPSGIGQRPRPMSSEELPLASSWRSNNSRKSTADTEFADGSTTGERVLMKSPSPALHPPQKYKDRGILHPKRSTDDRSDQSSVKSTDSSSYPSPCASPSPPSSGKGSKSPSPRPNMPIRYFIMKSSNLRNLEISQQKGIWSTTPSNERKLNRAFWESSMVYLVFSVQGSGHFQGFSRMSSEIGREKSQDWGSAGLGGVFKVEWIRKESLPFQFAHHLLNPWNDNKKVQISRDGQELEPQVGEQLLQLWERLPLGEKTTSD.

The tract at residues 1–50 is disordered; the sequence is MSRPSSVSPRPPAPSGGGTGGGGGGSGGGGGGGGGGPASCGPGGGGRAKG. Residues 15 to 48 are compositionally biased toward gly residues; the sequence is SGGGTGGGGGGSGGGGGGGGGGPASCGPGGGGRA. Positions 53 to 121 constitute an R3H domain; the sequence is DIRIDEEVKI…NRYLTVKKKD (69 aa). The Helicase ATP-binding domain occupies 218-384; the sequence is VKIIKENKVV…FGSCPVIYIQ (167 aa). Residue 231–238 participates in ATP binding; that stretch reads GETGSGKT. A DEAH box motif is present at residues 331-334; that stretch reads DEVH. ANK repeat units lie at residues 521-553 and 554-586; these read TSAT…SKAS and NGWM…FGNL. The Helicase C-terminal domain occupies 627–799; sequence LLYNICHSCD…ELCLHTKLLA (173 aa). 3 positions are modified to phosphoserine: S1104, S1105, and S1107. A compositionally biased stretch (polar residues) spans 1179-1189; the sequence is EQSAGLQQPSG. Positions 1179 to 1303 are disordered; it reads EQSAGLQQPS…SPSPRPNMPI (125 aa). Over residues 1246–1264 the composition is skewed to basic and acidic residues; that stretch reads KYKDRGILHPKRSTDDRSD. Residues 1265–1279 are compositionally biased toward low complexity; it reads QSSVKSTDSSSYPSP. Residues S1278, S1282, and S1296 each carry the phosphoserine modification. In terms of domain architecture, YTH spans 1303–1433; the sequence is IRYFIMKSSN…QVGEQLLQLW (131 aa). RNA is bound by residues 1309–1311, W1325, and W1375; that span reads KSS.

This sequence belongs to the DEAD box helicase family. DEAH subfamily. In terms of assembly, interacts with MEIOC; binds transcripts that regulate the mitotic cell cycle inhibiting progression into metaphase, thereby allowing meiotic prophase to proceed normally. Interacts (via ANK repeats) with XRN1. Interacts with ZCCHC4. Associates with the small ribosomal subunit. Interacts with RBM46. As to expression, present in male and female germ cells (at protein level). Highly expressed in testis. Not detected in spermatogonia next to the tubule wall but is strongly expressed in spermatocytes, suggesting that it is up-regulated in germ cells upon entry into meiosis (at protein level).

It localises to the cytoplasm. The protein localises to the perinuclear region. It carries out the reaction ATP + H2O = ADP + phosphate + H(+). In terms of biological role, 3'-5' RNA helicase that plays a key role in the male and female germline by promoting transition from mitotic to meiotic divisions in stem cells. Specifically recognizes and binds N6-methyladenosine (m6A)-containing RNAs, a modification present at internal sites of mRNAs and some non-coding RNAs that plays a role in the efficiency of RNA processing and stability. Essential for ensuring a successful progression of the meiotic program in the germline by regulating the level of m6A-containing RNAs. Acts by binding and promoting degradation of m6A-containing mRNAs: the 3'-5' RNA helicase activity is required for this process and RNA degradation may be mediated by XRN1 exoribonuclease. Required for both spermatogenesis and oogenesis. This Mus musculus (Mouse) protein is 3'-5' RNA helicase YTHDC2.